The sequence spans 188 residues: Meiotically up-regulated gene 94 protein (188 aa).

It localises to the cytoplasm. Its subcellular location is the nucleus. In terms of biological role, has a role in meiosis. In Schizosaccharomyces pombe (strain 972 / ATCC 24843) (Fission yeast), this protein is Meiotically up-regulated gene 94 protein (mug94).